Here is a 275-residue protein sequence, read N- to C-terminus: Dermonecrotic toxin LhSicTox-alphaIV2 (275 aa).

H5 is an active-site residue. Positions 25 and 27 each coordinate Mg(2+). H41 acts as the Nucleophile in catalysis. 2 disulfides stabilise this stretch: C45/C51 and C47/C192. D85 contributes to the Mg(2+) binding site.

It belongs to the arthropod phospholipase D family. Class II subfamily. It depends on Mg(2+) as a cofactor. As to expression, expressed by the venom gland.

It localises to the secreted. The enzyme catalyses an N-(acyl)-sphingosylphosphocholine = an N-(acyl)-sphingosyl-1,3-cyclic phosphate + choline. It carries out the reaction an N-(acyl)-sphingosylphosphoethanolamine = an N-(acyl)-sphingosyl-1,3-cyclic phosphate + ethanolamine. It catalyses the reaction a 1-acyl-sn-glycero-3-phosphocholine = a 1-acyl-sn-glycero-2,3-cyclic phosphate + choline. The catalysed reaction is a 1-acyl-sn-glycero-3-phosphoethanolamine = a 1-acyl-sn-glycero-2,3-cyclic phosphate + ethanolamine. Its function is as follows. Dermonecrotic toxins cleave the phosphodiester linkage between the phosphate and headgroup of certain phospholipids (sphingolipid and lysolipid substrates), forming an alcohol (often choline) and a cyclic phosphate. This toxin acts on sphingomyelin (SM). It may also act on ceramide phosphoethanolamine (CPE), lysophosphatidylcholine (LPC) and lysophosphatidylethanolamine (LPE), but not on lysophosphatidylserine (LPS), and lysophosphatidylglycerol (LPG). It acts by transphosphatidylation, releasing exclusively cyclic phosphate products as second products. Induces dermonecrosis, hemolysis, increased vascular permeability, edema, inflammatory response, and platelet aggregation. In Loxosceles hirsuta (Recluse spider), this protein is Dermonecrotic toxin LhSicTox-alphaIV2.